The primary structure comprises 115 residues: NADH-ubiquinone oxidoreductase chain 3 (115 aa).

3 helical membrane-spanning segments follow: residues 3 to 23 (LMLTLFINTSLASVLVLIAFW), 55 to 75 (FFLVAITFLLFDLEIALLLPL), and 86 to 106 (TMLTMALILISLLAASLAYEW).

Belongs to the complex I subunit 3 family. In terms of assembly, core subunit of respiratory chain NADH dehydrogenase (Complex I) which is composed of 45 different subunits. Interacts with TMEM186. Interacts with TMEM242.

Its subcellular location is the mitochondrion inner membrane. The catalysed reaction is a ubiquinone + NADH + 5 H(+)(in) = a ubiquinol + NAD(+) + 4 H(+)(out). In terms of biological role, core subunit of the mitochondrial membrane respiratory chain NADH dehydrogenase (Complex I) which catalyzes electron transfer from NADH through the respiratory chain, using ubiquinone as an electron acceptor. Essential for the catalytic activity of complex I. The protein is NADH-ubiquinone oxidoreductase chain 3 of Ceratotherium simum (White rhinoceros).